The following is a 350-amino-acid chain: Glycerol-1-phosphate dehydrogenase [NAD(P)+] (350 aa).

Residues 97 to 101 (GSIID) and 119 to 122 (TTAS) contribute to the NAD(+) site. Substrate is bound at residue aspartate 124. Serine 128 provides a ligand contact to NAD(+). A substrate-binding site is contributed by aspartate 171. Residues aspartate 171 and histidine 251 each coordinate Zn(2+). Residue histidine 255 coordinates substrate. Histidine 267 is a binding site for Zn(2+).

The protein belongs to the glycerol-1-phosphate dehydrogenase family. The cofactor is Zn(2+).

The protein resides in the cytoplasm. It carries out the reaction sn-glycerol 1-phosphate + NAD(+) = dihydroxyacetone phosphate + NADH + H(+). The catalysed reaction is sn-glycerol 1-phosphate + NADP(+) = dihydroxyacetone phosphate + NADPH + H(+). The protein operates within membrane lipid metabolism; glycerophospholipid metabolism. In terms of biological role, catalyzes the NAD(P)H-dependent reduction of dihydroxyacetonephosphate (DHAP or glycerone phosphate) to glycerol 1-phosphate (G1P). The G1P thus generated is used as the glycerophosphate backbone of phospholipids in the cellular membranes of Archaea. The sequence is that of Glycerol-1-phosphate dehydrogenase [NAD(P)+] from Thermococcus sibiricus (strain DSM 12597 / MM 739).